The primary structure comprises 459 residues: MAP kinase-interacting serine/threonine-protein kinase 2 (459 aa).

Residues 28–67 (LDPAQHGDSDFSPQCEARPDMPSSQPIDIPDAKKRGRKKK) are disordered. The Nuclear localization signal signature appears at 60–66 (KKRGRKK). Phosphoserine is present on Ser74. The Protein kinase domain occupies 84–368 (QLQEDVLGEG…AAQVLQHPWV (285 aa)). Residues 90-98 (LGEGAHARV) and Lys113 contribute to the ATP site. A staurosporine-binding site is contributed by 160 to 162 (EKM). The active-site Proton acceptor is the Asp205. Glu209 is a binding site for staurosporine. Phosphothreonine is present on residues Thr244 and Thr249. Zn(2+)-binding residues include Cys299, Cys311, and Cys314. Thr379 is subject to Phosphothreonine. Phosphoserine occurs at positions 431 and 434. The MAP kinase binding signature appears at 438-442 (LAQRR). Ser446 carries the phosphoserine modification. At Thr450 the chain carries Phosphothreonine.

The protein belongs to the protein kinase superfamily. CAMK Ser/Thr protein kinase family. As to quaternary structure, monomer. Interacts with the C-terminal regions of EIF4G1 and EIF4G2; this interaction is promoted when MAPK pathways are repressed but repressed upon ERK proteins activation. Also binds to dephosphorylated MAPK3/ERK1 and MAPK1/ER2K. Interaction with phosphorylated MAPK3/ERK1 and MAPK1/ER2K protects it from dephosphorylation and inactivation. Interacts with ESR2 and EIF4E in the nucleus. Mg(2+) serves as cofactor. Zn(2+) is required as a cofactor. Post-translationally, dual phosphorylation of Thr-244 and Thr-249 activates the kinase. Phosphorylation of Thr-379 activates the kinase. Phosphorylated upon arsenic trioxide As(2)O(3) treatment. Phosphorylated by MAPK1/ERK2, MAPK11 and MAPK14. Dephosphorylated by PP2A.

The protein resides in the cytoplasm. The protein localises to the nucleus. It localises to the PML body. The catalysed reaction is L-seryl-[protein] + ATP = O-phospho-L-seryl-[protein] + ADP + H(+). The enzyme catalyses L-threonyl-[protein] + ATP = O-phospho-L-threonyl-[protein] + ADP + H(+). Its activity is regulated as follows. Inhibited by CGP57380 and staurosporine. In terms of biological role, serine/threonine-protein kinase that phosphorylates SFPQ/PSF, HNRNPA1 and EIF4E. May play a role in the response to environmental stress and cytokines. Appears to regulate translation by phosphorylating EIF4E, thus increasing the affinity of this protein for the 7-methylguanosine-containing mRNA cap. Required for mediating PP2A-inhibition-induced EIF4E phosphorylation. Triggers EIF4E shuttling from cytoplasm to nucleus. Enhances the formation of EIF4F complex in pachytene spermatocytes, thus promoting mRNA translation during spermatogenesis. Displays a high basal kinase activity. Acts as a mediator of the suppressive effects of IFNgamma on hematopoiesis. Negative regulator for signals that control generation of arsenic trioxide As(2)O(3)-dependent apoptosis and anti-leukemic responses. Involved in anti-apoptotic signaling in response to serum withdrawal. The polypeptide is MAP kinase-interacting serine/threonine-protein kinase 2 (Mknk2) (Rattus norvegicus (Rat)).